We begin with the raw amino-acid sequence, 630 residues long: Ankyrin repeat protein OPG025 (630 aa).

ANK repeat units follow at residues 36 to 69 (DGETPLKAYVTKKNNNIKNDVVILLLSSVDYKNI), 70 to 100 (NDFDIFEYLCSDNIDIDLLKLLISKGIEINS), 103 to 134 (NGINIVEKYATTSNPNIDVFKLLLDKGIPTCS), 174 to 210 (MGKTVLYYYIITRSQDGYVTSLDVINYLISHENEMCH), 338 to 367 (KHINKYFKRFDNRDPKVVEYILKNGNVVVN), and 408 to 437 (HGRSILYYCIESHSVALIEWLIDNGADINI).

It belongs to the orthopoxvirus OPG025 family. In terms of assembly, interacts with components of host SCF complex CUL1 and SKP1 and components of the cullin deneddylation/COP9 signalosome complex subunits COPS7A and COPS7B.

Its function is as follows. Plays a role in the inhibition of host immune repsonse by counteracting the action of interferons on early events in the viral replication cycle. The chain is Ankyrin repeat protein OPG025 (OPG025) from Monkeypox virus.